Consider the following 433-residue polypeptide: Signal recognition particle 54 kDa protein (433 aa).

GTP contacts are provided by residues 100–107 (GLQGSGKT), 180–184 (DTAGR), and 238–241 (TKFD).

It belongs to the GTP-binding SRP family. SRP54 subfamily. In terms of assembly, part of the signal recognition particle protein translocation system, which is composed of SRP and FtsY. Archaeal SRP consists of a 7S RNA molecule of 300 nucleotides and two protein subunits: SRP54 and SRP19.

Its subcellular location is the cytoplasm. It catalyses the reaction GTP + H2O = GDP + phosphate + H(+). Its function is as follows. Involved in targeting and insertion of nascent membrane proteins into the cytoplasmic membrane. Binds to the hydrophobic signal sequence of the ribosome-nascent chain (RNC) as it emerges from the ribosomes. The SRP-RNC complex is then targeted to the cytoplasmic membrane where it interacts with the SRP receptor FtsY. The chain is Signal recognition particle 54 kDa protein from Archaeoglobus fulgidus (strain ATCC 49558 / DSM 4304 / JCM 9628 / NBRC 100126 / VC-16).